We begin with the raw amino-acid sequence, 149 residues long: Down syndrome critical region protein 9 (149 aa).

The tract at residues 1–41 (MGRICPVNSRARRLRARPGRPSGDSLPYHQLQGGAPRLWSP) is disordered.

This chain is Down syndrome critical region protein 9 (DSCR9), found in Pan troglodytes (Chimpanzee).